The primary structure comprises 299 residues: Delta-9 desaturase-like 2 protein (299 aa).

The chain crosses the membrane as a helical span at residues 55-75 (WEAFRFGIILAILTNLCITFS). The short motif at 77-82 (HRNLTH) is the Histidine box-1 element. The Histidine box-2 signature appears at 114 to 118 (HRFHH). A helical transmembrane segment spans residues 174–194 (LVLHILAFWTLIYLWGGLPYL). The Histidine box-3 motif lies at 246–250 (HNNHH). The chain crosses the membrane as a helical span at residues 262 to 282 (WYQLDITWYLIWFFQALGLAT).

The protein belongs to the fatty acid desaturase type 1 family. The cofactor is Fe cation.

The protein resides in the endoplasmic reticulum membrane. The protein operates within lipid metabolism; polyunsaturated fatty acid biosynthesis. This Arabidopsis thaliana (Mouse-ear cress) protein is Delta-9 desaturase-like 2 protein.